A 148-amino-acid polypeptide reads, in one-letter code: UPF0756 membrane protein YeaL (148 aa).

4 helical membrane passes run 14 to 34 (ALGFISHNTTVAVSILVLIIV), 51 to 71 (LSIGIIILTIGVMAPIASGTL), 86 to 106 (LVAIAVGVIVSWLGGRGVTLM), and 112 to 132 (LVAGLLVGTVLGVALFRGVPV).

Belongs to the UPF0756 family.

It is found in the cell membrane. The chain is UPF0756 membrane protein YeaL from Escherichia coli O157:H7.